The following is a 308-amino-acid chain: uncharacterized protein (308 aa).

The active site involves E59.

Belongs to the PhzF family.

This is an uncharacterized protein from Deinococcus radiodurans (strain ATCC 13939 / DSM 20539 / JCM 16871 / CCUG 27074 / LMG 4051 / NBRC 15346 / NCIMB 9279 / VKM B-1422 / R1).